The primary structure comprises 93 residues: Phosphoribosyl-ATP pyrophosphatase (93 aa).

It belongs to the PRA-PH family.

It is found in the cytoplasm. It carries out the reaction 1-(5-phospho-beta-D-ribosyl)-ATP + H2O = 1-(5-phospho-beta-D-ribosyl)-5'-AMP + diphosphate + H(+). Its pathway is amino-acid biosynthesis; L-histidine biosynthesis; L-histidine from 5-phospho-alpha-D-ribose 1-diphosphate: step 2/9. This chain is Phosphoribosyl-ATP pyrophosphatase, found in Mycolicibacterium paratuberculosis (strain ATCC BAA-968 / K-10) (Mycobacterium paratuberculosis).